Here is a 421-residue protein sequence, read N- to C-terminus: L-evernosamine nitrososynthase (421 aa).

The protein belongs to the acyl-CoA dehydrogenase family. Homotetramer. FAD serves as cofactor.

It catalyses the reaction dTDP-beta-L-evernosamine + 2 NADPH + 2 O2 + H(+) = dTDP-2,3,6-trideoxy-3-C-methyl-4-O-methyl-3-nitroso-beta-L-arabino-hexopyranose + 2 NADP(+) + 3 H2O. The enzyme catalyses dTDP-beta-L-evernosamine + NADPH + O2 = dTDP-N-hydroxy-beta-L-evernosamine + NADP(+) + H2O. The catalysed reaction is dTDP-N-hydroxy-beta-L-evernosamine + NADPH + O2 + H(+) = dTDP-2,3,6-trideoxy-3-C-methyl-4-O-methyl-3-nitroso-beta-L-arabino-hexopyranose + NADP(+) + 2 H2O. It functions in the pathway antibiotic biosynthesis. Functionally, nitrososynthase involved in the biosynthesis of everninomicin, a broad spectrum orthosomycin antibiotic. Catalyzes the double-oxidation of TDP-L-evernosamine to TDP-L-evernitrosose. The enzyme first oxidizes the substrate to a transient hydroxylamino intermediate, which is then further oxidized to nitroso sugar. The nitroso group is probably spontaneously oxidized giving TDP-L-evernitrose. In vitro, catalyzes the double-oxidation of TDP-L-epi-vancosamine to TDP-L-epi-vancosonitrose. Can also use biosynthetic progenitors of TDP-L-epi-vancosamine, but progenitors solely undergo single-oxidation reactions and terminate in the hydroxylamine oxidation state. The sequence is that of L-evernosamine nitrososynthase from Micromonospora sp. (strain ATCC 39149 / NRRL 15099 / SCC 1413).